The primary structure comprises 366 residues: MVIQPSLLLLLLLTLQDVDSCQGPELVRELVLAKVKALFLDALGPPAMDGEGGGPGIRRLPRRHALGGFMHRTSEPEEEDVSQAILFPATGATCEDQAAAGGLAQEPEEGLFTYVFRPSQHIRSHQVTSAQLWFHTGLDRKSTAASNSSRPLLDLLVLSSGGPMAVPVSLGQSPPRWAVLHLAASAFPLLTHPILVLLLRCPLCSCSGRPETTPFLVAHTRARAPSAGERARRSAPSMPWPWSPAALRLLQRPPEEPSAHAFCHRAALNISFQELGWDRWIVHPPSFIFHYCHGSCGMPTSDLPLPVPGAPPTPAQPLFLVPGAKPCCAALPGSMRSLRVRTTSDGGYSFKYEMVPNLITQHCACI.

Positions 1-20 (MVIQPSLLLLLLLTLQDVDS) are cleaved as a signal peptide. Positions 21–63 (CQGPELVRELVLAKVKALFLDALGPPAMDGEGGGPGIRRLPRR) are excised as a propeptide. The propeptide at 64–233 (HALGGFMHRT…APSAGERARR (170 aa)) is inhibin alpha N-terminal region. Asn-147 and Asn-269 each carry an N-linked (GlcNAc...) asparagine glycan. Intrachain disulfides connect Cys-263-Cys-328, Cys-292-Cys-363, and Cys-296-Cys-365.

It belongs to the TGF-beta family. In terms of assembly, dimeric, linked by one or more disulfide bonds. Activin B is a dimer of alpha and beta-B. Inhibin A is a dimer of alpha and beta-A. Inhibin B is a dimer of alpha and beta-B. Interacts with TGFBR3L; this interaction regulates female fertility. Post-translationally, proteolytic processing yields a number of bioactive forms, consisting either solely of the mature alpha chain, of the most N-terminal propeptide linked through a disulfide bond to the mature alpha chain, or of the entire proprotein. As to expression, mainly expressed in ovary and testis. Alpha- and beta-B-subunits are the predominant forms found in testis. Also found in placenta, pituitary, adrenal gland, bone marrow, kidney, spinal cord and brain.

It is found in the secreted. Functionally, inhibins and activins inhibit and activate, respectively, the secretion of follitropin by the pituitary gland. Inhibins/activins are involved in regulating a number of diverse functions such as hypothalamic and pituitary hormone secretion, gonadal hormone secretion, germ cell development and maturation, erythroid differentiation, insulin secretion, nerve cell survival, embryonic axial development or bone growth, depending on their subunit composition. Inhibins appear to oppose the functions of activins. Its function is as follows. Inhibin A is a dimer of alpha/INHA and beta-A/INHBA that functions as a feedback regulator in the hypothalamic-pituitary-gonadal (HPG) axis. Inhibits the secretion of FSH from the anterior pituitary gland by acting on pituitary gonadotrope cells. Antagonizes activin A by binding to the proteoglycan, betaglycan, and forming a stable complex with and, thereby, sequestering type II activin receptors while excluding type I receptor. In terms of biological role, inhibin B is a dimer of alpha and beta-B that plays a crucial role in the regulation of the reproductive system by inhibiting the secretion of follicle-stimulating hormone (FSH) from the anterior pituitary gland. Thereby, maintains reproductive homeostasis in both males and females. Acts as a more potent suppressor of FSH release than inhibin A. Functions as competitive receptor antagonist binding activin type II receptors with high affinity in the presence of the TGF-beta type III coreceptor/TGFBR3L. In Rattus norvegicus (Rat), this protein is Inhibin alpha chain (Inha).